The chain runs to 1213 residues: Protein jagged-1b (1213 aa).

A signal peptide spans 1–26 (MILRRSSVFSAFYLHAFLLCLRTTVS). Over 27-1064 (DASGHFELEI…HQIPSPKTDY (1038 aa)) the chain is Extracellular. Asparagine 139 is a glycosylation site (N-linked (GlcNAc...) asparagine). A DSL domain is found at 182–226 (VTCLEHYYGFGCNKFCRPRDEFFGHYTCDQNGNKTCLEGWTGPDC). 2 disulfide bridges follow: cysteine 184–cysteine 193 and cysteine 197–cysteine 209. Asparagine 214 carries an N-linked (GlcNAc...) asparagine glycan. 39 disulfides stabilise this stretch: cysteine 217/cysteine 226, cysteine 231/cysteine 242, cysteine 235/cysteine 248, cysteine 250/cysteine 259, cysteine 262/cysteine 273, cysteine 268/cysteine 279, cysteine 281/cysteine 290, cysteine 297/cysteine 309, cysteine 303/cysteine 319, cysteine 321/cysteine 330, cysteine 337/cysteine 348, cysteine 342/cysteine 357, cysteine 359/cysteine 368, cysteine 375/cysteine 386, cysteine 380/cysteine 395, cysteine 397/cysteine 406, cysteine 413/cysteine 424, cysteine 418/cysteine 433, cysteine 435/cysteine 444, cysteine 451/cysteine 461, cysteine 455/cysteine 470, cysteine 472/cysteine 481, cysteine 488/cysteine 499, cysteine 493/cysteine 508, cysteine 510/cysteine 519, cysteine 526/cysteine 537, cysteine 531/cysteine 546, cysteine 548/cysteine 557, cysteine 596/cysteine 612, cysteine 614/cysteine 623, cysteine 630/cysteine 641, cysteine 635/cysteine 650, cysteine 652/cysteine 661, cysteine 668/cysteine 679, cysteine 673/cysteine 688, cysteine 690/cysteine 699, cysteine 706/cysteine 717, cysteine 711/cysteine 726, and cysteine 728/cysteine 737. An EGF-like 1 domain is found at 227–260 (NTAICRQGCSTEHGSCKQPGGCKCLYGWQGPYCD). The 31-residue stretch at 261–291 (KCIPHPGCVHGTCVEPWQCLCDTNWGGQLCD) folds into the EGF-like 2; atypical domain. 2 EGF-like domains span residues 293–331 (DLNY…VNCE) and 333–369 (AEHA…TSCE). An EGF-like 5; calcium-binding domain is found at 371-407 (NVDDCTPNQCKHGGTCQDLVNGFKCACPPHWTGKTCQ). The EGF-like 6; calcium-binding domain occupies 409 to 445 (DANECEDKPCVNAKSCHNLIGAYFCECLPGWSGQNCD). One can recognise an EGF-like 7; calcium-binding domain in the interval 447–482 (NINDCKGQCLNGGTCKDLVNGYRCLCPPGYTGEQCE). In terms of domain architecture, EGF-like 8; calcium-binding spans 484–520 (DVDECASSPCLNGGRCQDEVNGFQCLCPAGFSGQLCQ). 2 consecutive EGF-like domains span residues 522-558 (DIDY…KNCS) and 592-624 (SSNV…TYCH). N-linked (GlcNAc...) asparagine glycosylation occurs at asparagine 556. The EGF-like 11; calcium-binding domain maps to 626–662 (NINDCESNPCRNGGTCIDKVNVYQCICADGWEGVHCE). In terms of domain architecture, EGF-like 12; calcium-binding spans 664 to 700 (NIDDCSLNPCLNKGACQDLVNDFYCECRNGWKGKTCH). Positions 702 to 738 (RDSQCDEATCNNGGTCHDEGDTFKCRCSPGWEGATCN) constitute an EGF-like 13 domain. Asparagine 742 is a glycosylation site (N-linked (GlcNAc...) asparagine). 9 cysteine pairs are disulfide-bonded: cysteine 745/cysteine 756, cysteine 750/cysteine 765, cysteine 767/cysteine 776, cysteine 783/cysteine 794, cysteine 788/cysteine 803, cysteine 805/cysteine 814, cysteine 821/cysteine 832, cysteine 826/cysteine 841, and cysteine 843/cysteine 852. Positions 746 to 777 (LPNPCENGGTCVVNGDSFNCVCKEGWEGSTCT) constitute an EGF-like 14 domain. One can recognise an EGF-like 15; calcium-binding domain in the interval 779–815 (NTNDCNPHPCYNSGTCVDGENWYRCECAPGFAGPDCR). The 37-residue stretch at 817-853 (NINECQSSPCAFGSTCVDEINGYRCLCPPGRIGPDCQ) folds into the EGF-like 16; calcium-binding domain. Residues 860–914 (CIANGQVTADGAKWEEDCNICQCQNGRIHCTMMWCGPKSCRIGKARGGCPASQSC) enclose the VWFC domain. Residues 918-956 (KEEQCFVKPCPSLGECWPSAPPPPSKCHASFSYQDDSCA) enclose the EGF-like 17 domain. N-linked (GlcNAc...) asparagine glycosylation is found at asparagine 957, asparagine 988, and asparagine 1042. Residues 1065 to 1087 (LVPLLSSIFIVLWIFALASAFLW) traverse the membrane as a helical segment. At 1088-1213 (CIHRRRKQNT…QSLNRMEYIV (126 aa)) the chain is on the cytoplasmic side. Residues 1181–1202 (EERAPNKNPNWTNKQDNRDLET) form a disordered region.

Its subcellular location is the membrane. It is found in the cell membrane. Ligand for Notch receptors and involved in the mediation of Notch signaling. Seems to be involved in cell-fate decisions. This is Protein jagged-1b (jag1b) from Danio rerio (Zebrafish).